We begin with the raw amino-acid sequence, 414 residues long: Esterase FrsA (414 aa).

The protein belongs to the FrsA family.

It catalyses the reaction a carboxylic ester + H2O = an alcohol + a carboxylate + H(+). Functionally, catalyzes the hydrolysis of esters. The polypeptide is Esterase FrsA (Shigella dysenteriae serotype 1 (strain Sd197)).